Consider the following 101-residue polypeptide: uncharacterized protein (101 aa).

3 helical membrane-spanning segments follow: residues 20–40, 59–79, and 81–101; these read KHFI…LLGL, GVIA…MYIA, and SEMW…ALFF.

It is found in the endoplasmic reticulum. The protein resides in the membrane. This is an uncharacterized protein from Saccharomyces cerevisiae (strain ATCC 204508 / S288c) (Baker's yeast).